The chain runs to 295 residues: MLILPIVKGEYKKDYNLKHLTWFKVGGNAEIFFKPLDSEDLKSFLIQNKQKLPIKTFGAGSNIIIRDGGIEGVVIKLGQNFSNIEFIDNHLIVGSSCLNYNLAKFCQANAISGFEFLVGIPGTIGGGVAMNAGAYGSEFKDIVVQIEAIDFAGNFLTFTNEEIGFKYRSNNLPKNLIILKVIFKINKGDSENILLRMNEINNARSSTQPIKERTGGSTFANPEGCKSWELIDKAGLRGYRIGGASMSELHCNFMINNGDATAKDLEDLGNFVQQKVCEDSGVKLEWEIKRIGRHP.

The 165-residue stretch at 24-188 (KVGGNAEIFF…LKVIFKINKG (165 aa)) folds into the FAD-binding PCMH-type domain. Residue arginine 168 is part of the active site. Residue serine 217 is the Proton donor of the active site. Residue glutamate 287 is part of the active site.

The protein belongs to the MurB family. Requires FAD as cofactor.

Its subcellular location is the cytoplasm. It carries out the reaction UDP-N-acetyl-alpha-D-muramate + NADP(+) = UDP-N-acetyl-3-O-(1-carboxyvinyl)-alpha-D-glucosamine + NADPH + H(+). The protein operates within cell wall biogenesis; peptidoglycan biosynthesis. Cell wall formation. This chain is UDP-N-acetylenolpyruvoylglucosamine reductase, found in Rickettsia rickettsii (strain Iowa).